Reading from the N-terminus, the 91-residue chain is Teretoxin Tan22.13 (91 aa).

An N-terminal signal peptide occupies residues 1 to 21 (MKVQILFALMMVLVTLCLGQK). The propeptide occupies 22–24 (MQR).

This sequence belongs to the teretoxin C (TC) superfamily. Post-translationally, contains 4 disulfide bonds. Expressed by the venom duct.

The protein resides in the secreted. In Terebra anilis (Auger snail), this protein is Teretoxin Tan22.13.